The sequence spans 886 residues: MSAHEVSSTKNSEIERIIKEAEDAGPENALTLDLSHLNLRELPYEQLERIQGRIARLALGHNFIKSIGPEILKFTRLRYLNIRSNVLREFPESLCRLESLEILDISRNKIKQLPESFGALMNLKVLSISKNRLFELPTYIAHMPNLEILKIENNHIVFPPPHIANNDLQDSDMQLFIANIKGYLSRNESVFRTRSESTVSAALSASANLSHSEENDSSVVDSYLFSAPSDTSHAVSPGMLTFVTPSPHSHSPAGHQQSTPKSTLSKTNENSEGTLYDSNVAHGCTHPPSLNQLNKFHLDASPRQARPRRSVSLATGLNSPSVSKPPSSATGPLYHSPQSSLTNSSVASADVQERTHNTNGASPIQDQISEFTDQHQNPSNNDAASTQSILKTAPTQLSASAKTSAISLPEVAKKERNRSNSTNDDYSSTRLPSSVLHRLEALKEARKLSEQLPNRIFAQDPHPSPRLKKEETHENGSNLTNDSVNSYFSNIGGSEVEMKHSAFEKTLESSRGILFSLSQVQQALRQQLLFCSNPVVLDSMRHVLHTANVQIKRLILCFEDTQQSNDGTANINSIVNASLSCISSFRKLIEVTKKFLNELTSRADVRYVRLLLLILFDAAKELQNALVPLSPSQPHSGNNIFADQVRQSPTSMIRTASGLTNRIVSVEKPASVMNPEIDKQIQDQVALATNSAMSVLTLLIDAVPKNNQPDLVNENIAPNLISKLRELGSLSAAACDVTRKLKHRLLTFQTNPEELEWQLFLDDTQAFVKSIIAVANLAKALSSEYTFQKSVLAGLSAATRSTKDLTILLSSSARHYTESSLATPVPLMSPIARVPATPLSAALGSAAQSITSPLIMSPAAIPASAYSTNKIDYFTDADGNVEGLQR.

LRR repeat units lie at residues Asn-28–Arg-49, Arg-53–Phe-74, Arg-76–Leu-97, Ser-99–Leu-120, Asn-122–Met-143, and Asn-145–Asn-166. 4 disordered regions span residues Ser-236–Pro-288, Ser-301–Ile-364, Pro-394–Leu-431, and Arg-455–Ser-483. The segment covering Val-243–Asp-277 has biased composition (polar residues). Position 301 is a phosphoserine (Ser-301). 3 stretches are compositionally biased toward polar residues: residues Ser-312–Ala-347, Pro-394–Ile-406, and Ser-419–Leu-431. Position 464 is a phosphoserine (Ser-464).

Its subcellular location is the cytoplasm. The protein localises to the nucleus. The sequence is that of Leucine-rich repeat-containing protein sog2 from Schizosaccharomyces pombe (strain 972 / ATCC 24843) (Fission yeast).